Here is a 1020-residue protein sequence, read N- to C-terminus: Sodium/potassium-transporting ATPase subunit alpha-2 (1020 aa).

The propeptide occupies 1–5; sequence MGRGA. Positions 1–31 are disordered; that stretch reads MGRGAGREYSPAATTAENGGGKKKQKEKELD. Over 6-85 the chain is Cytoplasmic; the sequence is GREYSPAATT…NALTPPPTTP (80 aa). Ser10 bears the Phosphoserine mark. The interval 80-82 is interaction with phosphoinositide-3 kinase; sequence PPP. The helical transmembrane segment at 86–106 threads the bilayer; it reads EWVKFCRQLFGGFSILLWIGA. Topologically, residues 107–129 are extracellular; the sequence is ILCFLAFGIQAAMEDEPSNDNLY. Residues 130-150 traverse the membrane as a helical segment; that stretch reads LGVVLAAVVIVTGCFSYYQEA. Topologically, residues 151 to 286 are cytoplasmic; that stretch reads KSSKIMDSFK…VGRTPIAMEI (136 aa). The segment covering 212–227 has biased composition (polar residues); that stretch reads DNSSLTGESEPQTRSP. Residues 212–231 form a disordered region; it reads DNSSLTGESEPQTRSPEFTH. The helical transmembrane segment at 287 to 306 threads the bilayer; sequence EHFIQLITGVAVFLGVSFFV. Topologically, residues 307–318 are extracellular; sequence LSLILGYSWLEA. Residues 319 to 336 form a helical membrane-spanning segment; that stretch reads VIFLIGIIVANVPEGLLA. The Cytoplasmic portion of the chain corresponds to 337-769; that stretch reads TVTVCLTLTA…EEGRLIFDNL (433 aa). Residue Asp374 is the 4-aspartylphosphate intermediate of the active site. Phosphoserine occurs at positions 439, 450, 496, and 559. Thr570 bears the Phosphothreonine mark. Residues Ser587 and Ser672 each carry the phosphoserine modification. Mg(2+) contacts are provided by Asp714 and Asp718. The chain crosses the membrane as a helical span at residues 770–789; sequence KKSIAYTLTSNIPEITPFLL. At 790–799 the chain is on the extracellular side; that stretch reads FIIANIPLPL. A helical membrane pass occupies residues 800-820; that stretch reads GTVTILCIDLGTDMVPAISLA. Topologically, residues 821–840 are cytoplasmic; that stretch reads YEAAESDIMKRQPRNPQTDK. Phosphoserine is present on Ser826. A helical transmembrane segment spans residues 841-863; that stretch reads LVNERLISMAYGQIGMIQALGGF. At 864-915 the chain is on the extracellular side; that stretch reads FTYFVILAENGFLPSRLLGIRLDWDDRSMNDLEDSYGQEWTYEQRKVVEFTC. A helical membrane pass occupies residues 916 to 935; that stretch reads HTAFFASIVVVQWADLIICK. The Cytoplasmic portion of the chain corresponds to 936-948; it reads TRRNSVFQQGMKN. Ser940 carries the post-translational modification Phosphoserine; by PKA. Residues 949–967 form a helical membrane-spanning segment; that stretch reads KILIFGLLEETALAAFLSY. Residues 968-982 lie on the Extracellular side of the membrane; it reads CPGMGVALRMYPLKV. The chain crosses the membrane as a helical span at residues 983–1003; the sequence is TWWFCAFPYSLLIFIYDEVRK. Over 1004–1020 the chain is Cytoplasmic; it reads LILRRYPGGWVEKETYY.

This sequence belongs to the cation transport ATPase (P-type) (TC 3.A.3) family. Type IIC subfamily. In terms of assembly, the sodium/potassium-transporting ATPase is composed of a catalytic alpha subunit, an auxiliary non-catalytic beta subunit and an additional regulatory subunit. Interacts with regulatory subunit FXYD1.

It is found in the membrane. The protein localises to the cell membrane. The enzyme catalyses K(+)(out) + Na(+)(in) + ATP + H2O = K(+)(in) + Na(+)(out) + ADP + phosphate + H(+). Its function is as follows. This is the catalytic component of the active enzyme, which catalyzes the hydrolysis of ATP coupled with the exchange of sodium and potassium ions across the plasma membrane. This action creates the electrochemical gradient of sodium and potassium, providing the energy for active transport of various nutrients. The chain is Sodium/potassium-transporting ATPase subunit alpha-2 (ATP1A2) from Bos taurus (Bovine).